A 209-amino-acid chain; its full sequence is Kynurenine formamidase (209 aa).

Trp-20 serves as a coordination point for substrate. Positions 50, 54, and 56 each coordinate Zn(2+). His-60 serves as the catalytic Proton donor/acceptor. Residues His-161 and Glu-173 each contribute to the Zn(2+) site.

It belongs to the Cyclase 1 superfamily. KynB family. In terms of assembly, homodimer. The cofactor is Zn(2+).

The catalysed reaction is N-formyl-L-kynurenine + H2O = L-kynurenine + formate + H(+). Its pathway is amino-acid degradation; L-tryptophan degradation via kynurenine pathway; L-kynurenine from L-tryptophan: step 2/2. Its function is as follows. Catalyzes the hydrolysis of N-formyl-L-kynurenine to L-kynurenine, the second step in the kynurenine pathway of tryptophan degradation. This is Kynurenine formamidase from Bacillus cereus (strain ZK / E33L).